A 591-amino-acid chain; its full sequence is L-fucose isomerase (591 aa).

Catalysis depends on proton acceptor residues Glu-337 and Asp-361. 3 residues coordinate Mn(2+): Glu-337, Asp-361, and His-528.

The protein belongs to the L-fucose isomerase family. Homohexamer. Requires Mn(2+) as cofactor.

It is found in the cytoplasm. The enzyme catalyses L-fucose = L-fuculose. It participates in carbohydrate degradation; L-fucose degradation; L-lactaldehyde and glycerone phosphate from L-fucose: step 1/3. Its function is as follows. Converts the aldose L-fucose into the corresponding ketose L-fuculose. This chain is L-fucose isomerase, found in Escherichia coli (strain 55989 / EAEC).